The chain runs to 52 residues: Large ribosomal subunit protein eL39 (52 aa).

It belongs to the eukaryotic ribosomal protein eL39 family. In terms of assembly, interacts with YIH1.

The protein is Large ribosomal subunit protein eL39 (RPL39) of Encephalitozoon cuniculi (strain GB-M1) (Microsporidian parasite).